Consider the following 445-residue polypeptide: Glutamate--tRNA ligase 2 (445 aa).

The short motif at 10–20 (PSPTGRLHVGN) is the 'HIGH' region element. The 'KMSKS' region signature appears at 241–245 (ALSKR). Residue lysine 244 coordinates ATP.

Belongs to the class-I aminoacyl-tRNA synthetase family. Glutamate--tRNA ligase type 1 subfamily. As to quaternary structure, monomer.

The protein resides in the cytoplasm. The catalysed reaction is tRNA(Glu) + L-glutamate + ATP = L-glutamyl-tRNA(Glu) + AMP + diphosphate. Catalyzes the attachment of glutamate to tRNA(Glu) in a two-step reaction: glutamate is first activated by ATP to form Glu-AMP and then transferred to the acceptor end of tRNA(Glu). This is Glutamate--tRNA ligase 2 from Hyphomonas neptunium (strain ATCC 15444).